Reading from the N-terminus, the 198-residue chain is Beta-crystallin A1-2 (198 aa).

The N-terminal arm stretch occupies residues 1-13 (MAQINPLPVPLGP). Beta/gamma crystallin 'Greek key' domains lie at 14-53 (WKIT…KVEC) and 54-100 (GAWI…RPIC). Positions 101 to 106 (SANHIE) are connecting peptide. Beta/gamma crystallin 'Greek key' domains follow at residues 107–148 (SKLV…KVQC) and 149–197 (GAWV…RRIQ).

The protein belongs to the beta/gamma-crystallin family. Homo/heterodimer, or complexes of higher-order. The structure of beta-crystallin oligomers seems to be stabilized through interactions between the N-terminal arms. The N-terminus is blocked.

Its function is as follows. Crystallins are the dominant structural components of the vertebrate eye lens. The sequence is that of Beta-crystallin A1-2 from Aquarana catesbeiana (American bullfrog).